We begin with the raw amino-acid sequence, 454 residues long: tRNA modification GTPase MnmE (454 aa).

Residues Arg-23, Glu-80, and Lys-120 each contribute to the (6S)-5-formyl-5,6,7,8-tetrahydrofolate site. The TrmE-type G domain occupies 216 to 377; sequence GMKVVIAGRP…LRNHLKQSMG (162 aa). Asn-226 serves as a coordination point for K(+). Residues 226-231, 245-251, 270-273, 335-338, and 358-360 contribute to the GTP site; these read NAGKSS, TDIAGTT, DTAG, NKAD, and SAR. Residue Ser-230 coordinates Mg(2+). The K(+) site is built by Thr-245, Ile-247, and Thr-250. Thr-251 provides a ligand contact to Mg(2+). Lys-454 lines the (6S)-5-formyl-5,6,7,8-tetrahydrofolate pocket.

The protein belongs to the TRAFAC class TrmE-Era-EngA-EngB-Septin-like GTPase superfamily. TrmE GTPase family. Homodimer. Heterotetramer of two MnmE and two MnmG subunits. The cofactor is K(+).

Its subcellular location is the cytoplasm. Exhibits a very high intrinsic GTPase hydrolysis rate. Involved in the addition of a carboxymethylaminomethyl (cmnm) group at the wobble position (U34) of certain tRNAs, forming tRNA-cmnm(5)s(2)U34. The protein is tRNA modification GTPase MnmE of Escherichia coli O127:H6 (strain E2348/69 / EPEC).